The following is a 795-amino-acid chain: Protocadherin beta-4 (795 aa).

The N-terminal stretch at 1–27 (MKKLGRIHPNRQVLAFILMVFLSQVRL) is a signal peptide. The Extracellular segment spans residues 28–689 (EPIRYSVLEE…AQADSLTVYL (662 aa)). Cadherin domains are found at residues 34–132 (VLEE…SPIF), 137–241 (VLLK…APEF), 246–346 (YGVQ…PPEL), 351–450 (LTSS…APAF), and 455–560 (YTLF…SPFV). Asn183 is a glycosylation site (N-linked (GlcNAc...) asparagine). Asn417 and Asn435 each carry an N-linked (GlcNAc...) asparagine glycan. Asn566 carries N-linked (GlcNAc...) asparagine glycosylation. Residues 567–670 (GSAPCTELVP…LVDGFSQPYL (104 aa)) enclose the Cadherin 6 domain. Residues 690-710 (VVALASVSSLFLFSVLLFVAV) traverse the membrane as a helical segment. Over 711-795 (RLCRRSRAAS…PKFRNSLVFS (85 aa)) the chain is Cytoplasmic.

It is found in the cell membrane. Functionally, potential calcium-dependent cell-adhesion protein. May be involved in the establishment and maintenance of specific neuronal connections in the brain. In Homo sapiens (Human), this protein is Protocadherin beta-4 (PCDHB4).